The following is a 424-amino-acid chain: MDISDHHMTDVGIIRPDVHIEVHVKSQSTAKRSDVRTHVLSLLDRHSTVLRSFKWMDFDNEFLTKNVESVTIADVTGPKLVDLKVHNLCIHIFTLNDDSPSTLNLEEEEELSAANLWLLPAVEFHGVWESLIYEEGIKTQLLDYVSTTIFFSDKNVDSNLIAWNRVVLLHGPPGTGKTSLCKGLAQKLSIRLSDRYAHSQFVEINSHSLFSKWFSESGKLVTKMFQKIQELIDDKDALVFVLIDEVESLTAARSAAQAGTEPSDAIRVVNSVLTQLDQIKRHPNVVILTTSNVTEKIDLAFVDRADIKQYIGPPSAKAIFNIYLSSLEELMKRQIIYPRQQLVSLEELETMNFMESDVTRLSLCLMNISQRSVGLSGRALRKIPFLAHALYGKTSTMTLKGFLTAMEHAVNKQRQEQASLVNCV.

171 to 178 (GPPGTGKT) provides a ligand contact to ATP.

It belongs to the AAA ATPase family. PCH2 subfamily.

Its function is as follows. Plays a key role in chromosome recombination and chromosome structure development during meiosis. Required at early steps in meiotic recombination that leads to non-crossovers pathways. Also needed for efficient completion of homologous synapsis by influencing crossover distribution along the chromosomes affecting both crossovers and non-crossovers pathways. The sequence is that of Pachytene checkpoint protein 2 homolog (trip13) from Danio rerio (Zebrafish).